A 183-amino-acid polypeptide reads, in one-letter code: Potassium-transporting ATPase KdpC subunit (183 aa).

A helical transmembrane segment spans residues 11–31 (LILLLAVVTGALYPLAVTGVA).

It belongs to the KdpC family. As to quaternary structure, the system is composed of three essential subunits: KdpA, KdpB and KdpC.

It localises to the cell inner membrane. Its function is as follows. Part of the high-affinity ATP-driven potassium transport (or Kdp) system, which catalyzes the hydrolysis of ATP coupled with the electrogenic transport of potassium into the cytoplasm. This subunit acts as a catalytic chaperone that increases the ATP-binding affinity of the ATP-hydrolyzing subunit KdpB by the formation of a transient KdpB/KdpC/ATP ternary complex. The polypeptide is Potassium-transporting ATPase KdpC subunit (Pseudomonas putida (strain W619)).